The following is a 38-amino-acid chain: Small ribosomal subunit protein eS32 (38 aa).

The protein belongs to the eukaryotic ribosomal protein eS32 family. Component of the small ribosomal subunit (SSU).

This Methanocaldococcus jannaschii (strain ATCC 43067 / DSM 2661 / JAL-1 / JCM 10045 / NBRC 100440) (Methanococcus jannaschii) protein is Small ribosomal subunit protein eS32 (rpl41e).